The primary structure comprises 372 residues: 3-galactosyl-N-acetylglucosaminide 4-alpha-L-fucosyltransferase FUT3 (372 aa).

Topologically, residues 1–15 are cytoplasmic; sequence MDPLGAAKTQWPWRR. A helical; Signal-anchor for type II membrane protein transmembrane segment spans residues 16-34; that stretch reads CLAALLFQLLVAVCFFSYL. The Lumenal portion of the chain corresponds to 35–372; sequence RVSRDDATGS…MVRSIAAWFT (338 aa). Positions 40-68 are disordered; sequence DATGSPRPGLMAVEPVTGAPGGSSRQDTT. 2 N-linked (GlcNAc...) asparagine glycosylation sites follow: N165 and N196.

This sequence belongs to the glycosyltransferase 10 family. In terms of processing, glycosylated.

Its subcellular location is the golgi apparatus. The protein resides in the golgi stack membrane. The enzyme catalyses a beta-D-galactosyl-(1-&gt;3)-N-acetyl-beta-D-glucosaminyl derivative + GDP-beta-L-fucose = a beta-D-galactosyl-(1-&gt;3)-[alpha-L-fucosyl-(1-&gt;4)]-N-acetyl-beta-D-glucosaminyl derivative + GDP + H(+). It catalyses the reaction an N-acetyl-alpha-neuraminyl-(2-&gt;3)-beta-D-galactosyl-(1-&gt;4)-N-acetyl-beta-D-glucosaminyl derivative + GDP-beta-L-fucose = an alpha-Neu5Ac-(2-&gt;3)-beta-D-Gal-(1-&gt;4)-[alpha-L-Fuc-(1-&gt;3)]-beta-D-GlcNAc derivative + GDP + H(+). It carries out the reaction a beta-D-galactosyl-(1-&gt;4)-N-acetyl-beta-D-glucosaminyl derivative + GDP-beta-L-fucose = a beta-D-galactosyl-(1-&gt;4)-[alpha-L-fucosyl-(1-&gt;3)]-N-acetyl-beta-D-glucosaminyl derivative + GDP + H(+). The catalysed reaction is an alpha-Neu5Ac-(2-&gt;3)-beta-D-Gal-(1-&gt;4)-beta-D-GlcNAc-(1-&gt;3)-beta-D-Gal-(1-&gt;4)-[alpha-L-Fuc-(1-&gt;3)]-beta-D-GlcNAc derivative + GDP-beta-L-fucose = an alpha-Neu5Ac-(2-&gt;3)-beta-D-Gal-(1-&gt;4)-[alpha-L-Fuc-(1-&gt;3)]-beta-D-GlcNAc-(1-&gt;3)-beta-D-Gal-(1-&gt;4)-[alpha-L-Fuc-(1-&gt;3)]-beta-D-GlcNAc derivative + GDP + H(+). The enzyme catalyses Lc4Cer + GDP-beta-L-fucose = a lactoside III(4)-a-Fuc-Lc4Cer + GDP + H(+). It catalyses the reaction a beta-D-Gal-(1-&gt;3)-beta-D-GlcNAc-(1-&gt;3)-beta-D-Gal-(1-&gt;4)-beta-D-Glc-(1&lt;-&gt;1')-Cer(d18:1(4E)) + GDP-beta-L-fucose = a III(4)-a-Fuc-Lc4Cer(d18:1(4E)) + GDP + H(+). It carries out the reaction N-acetyl-alpha-neuraminosyl-(2-&gt;3)-beta-D-galactosyl-(1-&gt;3)-[N-acetyl-alpha-neuraminosyl-(2-&gt;6)]-N-acetyl-beta-D-glucosaminyl-(1-&gt;3)-beta-D-galactosyl-(1-&gt;4)-beta-D-glucosyl-(1&lt;-&gt;1')-N-acyl-sphing-4-enine + GDP-beta-L-fucose = N-acetyl-alpha-neuraminosyl-(2-&gt;3)-beta-D-galactosyl-(1-&gt;3)-alpha-L-fucosyl-(1-&gt;4)-[N-acetyl-alpha-neuraminosyl-(2-&gt;6)-N-acetyl-beta-D-glucosaminyl-(1-&gt;3)]-beta-D-galactosyl-(1-&gt;4)-beta-D-glucosyl-(1&lt;-&gt;1')-N-acyl-sphing-4-enine + GDP + H(+). The catalysed reaction is N-acetyl-alpha-neuraminosyl-(2-&gt;3)-beta-D-galactosyl-(1-&gt;3)-N-acetyl-beta-D-glucosaminyl-(1-&gt;3)-beta-D-galactosyl-(1-&gt;4)-beta-D-glucosyl-(1&lt;-&gt;1')-N-acyl-sphing-4-enine + GDP-beta-L-fucose = N-acetyl-alpha-neuraminosyl-(2-&gt;3)-beta-D-galactosyl-(1-&gt;3)-alpha-L-fucosyl-(1-&gt;4)-[N-acetyl-beta-D-glucosaminyl-(1-&gt;3)]-beta-D-galactosyl-(1-&gt;4)-beta-D-glucosyl-(1&lt;-&gt;1')-N-acyl-sphing-4-enine + GDP + H(+). The enzyme catalyses beta-D-galactosyl-(1-&gt;3)-N-acetyl-D-glucosamine + GDP-beta-L-fucose = beta-D-galactosyl-(1-&gt;3)-[alpha-L-fucosyl-(1-&gt;4)]-N-acetyl-D-glucosamine + GDP + H(+). It catalyses the reaction alpha-L-Fuc-(1-&gt;2)-beta-D-Gal-(1-&gt;3)-D-GlcNAc + GDP-beta-L-fucose = alpha-L-Fuc-(1-&gt;2)-beta-D-Gal-(1-&gt;3)-[alpha-L-Fuc-(1-&gt;4)]-D-GlcNAc + GDP + H(+). It carries out the reaction alpha-L-Fuc-(1-&gt;2)-beta-D-Gal-(1-&gt;4)-D-GlcNAc + GDP-beta-L-fucose = alpha-L-Fuc-(1-&gt;2)-beta-D-Gal-(1-&gt;4)-[alpha-L-Fuc-(1-&gt;3)]-D-GlcNAc + GDP + H(+). The catalysed reaction is beta-D-galactosyl-(1-&gt;4)-N-acetyl-D-glucosamine + GDP-beta-L-fucose = beta-D-galactosyl-(1-&gt;4)-[alpha-L-fucosyl-(1-&gt;3)]-N-acetyl-D-glucosamine + GDP + H(+). The enzyme catalyses lactose + GDP-beta-L-fucose = beta-D-galactosyl-(1-&gt;4)-[alpha-L-fucosyl-(1-&gt;3)]-D-glucose + GDP + H(+). It catalyses the reaction an alpha-Neu5Ac-(2-&gt;3)-beta-D-Gal-(1-&gt;3)-D-GlcNAc derivative + GDP-beta-L-fucose = an alpha-Neu5Ac-(2-&gt;3)-beta-D-Gal-(1-&gt;3)-[alpha-L-Fuc-(1-&gt;4)]-beta-D-GlcNAc derivative + GDP + H(+). The protein operates within protein modification; protein glycosylation. Functionally, catalyzes the transfer of L-fucose, from a guanosine diphosphate-beta-L-fucose, to both the subterminal N-acetyl glucosamine (GlcNAc) of type 1 chain (beta-D-Gal-(1-&gt;3)-beta-D-GlcNAc) glycolipids and oligosaccharides via an alpha(1,4) linkage, and the subterminal glucose (Glc) or GlcNAc of type 2 chain (beta-D-Gal-(1-&gt;4)-beta-D-GlcNAc) oligosaccharides via an alpha(1,3) linkage, independently of the presence of terminal alpha-L-fucosyl-(1,2) moieties on the terminal galactose of these acceptors and participates in the blood groups Lewis determination and expression of Lewis a (Le(a)), lewis b (Le(b)), Lewis x/SSEA-1 (Le(x)) and lewis y (Le(y)) antigens. Also catalyzes the transfer of L-fucose to subterminal GlcNAc of sialyl- and disialyl-lactotetraosylceramide to produce sialyl Lewis a (sLe(a)) and disialyl Lewis a via an alpha(1,4) linkage and therefore may regulate cell surface sialyl Lewis a expression and consequently regulates adhesive properties to E-selectin, cell proliferation and migration. Catalyzes the transfer of an L-fucose to 3'-sialyl-N-acetyllactosamine by an alpha(1,3) linkage, which allows the formation of sialyl-Lewis x structure and therefore may regulate the sialyl-Lewis x surface antigen expression and consequently adhesive properties to E-selectin. Prefers type 1 chain over type 2 acceptors. Type 1 tetrasaccharide is a better acceptor than type 1 disaccharide suggesting that a beta anomeric configuration of GlcNAc in the substrate is preferred. Lewis-positive (Le(+)) individuals have an active enzyme while Lewis-negative (Le(-)) individuals have an inactive enzyme. The protein is 3-galactosyl-N-acetylglucosaminide 4-alpha-L-fucosyltransferase FUT3 of Pongo pygmaeus (Bornean orangutan).